A 259-amino-acid polypeptide reads, in one-letter code: 5'-nucleotidase SurE (259 aa).

A divalent metal cation is bound by residues D13, D14, S44, and N100.

It belongs to the SurE nucleotidase family. A divalent metal cation serves as cofactor.

The protein resides in the cytoplasm. It carries out the reaction a ribonucleoside 5'-phosphate + H2O = a ribonucleoside + phosphate. Nucleotidase that shows phosphatase activity on nucleoside 5'-monophosphates. The sequence is that of 5'-nucleotidase SurE from Bacteroides thetaiotaomicron (strain ATCC 29148 / DSM 2079 / JCM 5827 / CCUG 10774 / NCTC 10582 / VPI-5482 / E50).